The following is a 168-amino-acid chain: Transcription antitermination protein NusB (168 aa).

Belongs to the NusB family.

Involved in transcription antitermination. Required for transcription of ribosomal RNA (rRNA) genes. Binds specifically to the boxA antiterminator sequence of the ribosomal RNA (rrn) operons. The protein is Transcription antitermination protein NusB of Brucella anthropi (strain ATCC 49188 / DSM 6882 / CCUG 24695 / JCM 21032 / LMG 3331 / NBRC 15819 / NCTC 12168 / Alc 37) (Ochrobactrum anthropi).